A 100-amino-acid polypeptide reads, in one-letter code: Enhancer of yellow 2 transcription factor (100 aa).

It belongs to the ENY2 family. In terms of assembly, component of the nuclear pore complex (NPC)-associated AMEX complex (anchoring and mRNA export complex), composed of at least e(y)2 and xmas-2. Component of the SAGA transcription coactivator-HAT complexes, at least composed of Ada2b, e(y)2, Pcaf/Gcn5, Taf10 and Nipped-A/Trrap. Within the SAGA complex, e(y)2, Sgf11, and not/nonstop form an additional subcomplex of SAGA called the DUB module (deubiquitination module). Component of the THO complex, composed of at least e(y)2, HPR1, THO2, THOC5, THOC6 and THOC7. Interacts with e(y)1. Interacts with su(Hw) (via zinc fingers). Interacts with xmas-2; required for localization to the nuclear periphery. Interacts with the nuclear pore complex (NPC).

Its subcellular location is the nucleus. It is found in the nucleoplasm. The protein localises to the cytoplasm. In terms of biological role, involved in mRNA export coupled transcription activation by association with both the AMEX and the SAGA complexes. The SAGA complex is a multiprotein complex that activates transcription by remodeling chromatin and mediating histone acetylation and deubiquitination. Within the SAGA complex, participates in a subcomplex that specifically deubiquitinates histone H2B. The SAGA complex is recruited to specific gene promoters by activators, where it is required for transcription. Required for nuclear receptor-mediated transactivation. Involved in transcription elongation by recruiting the THO complex onto nascent mRNA. The AMEX complex functions in docking export-competent ribonucleoprotein particles (mRNPs) to the nuclear entrance of the nuclear pore complex (nuclear basket). AMEX participates in mRNA export and accurate chromatin positioning in the nucleus by tethering genes to the nuclear periphery. The polypeptide is Enhancer of yellow 2 transcription factor (Drosophila persimilis (Fruit fly)).